A 237-amino-acid chain; its full sequence is Ribonuclease PH (237 aa).

Phosphate-binding positions include arginine 86 and 124–126; that span reads GTR.

Belongs to the RNase PH family. As to quaternary structure, homohexameric ring arranged as a trimer of dimers.

The enzyme catalyses tRNA(n+1) + phosphate = tRNA(n) + a ribonucleoside 5'-diphosphate. Its function is as follows. Phosphorolytic 3'-5' exoribonuclease that plays an important role in tRNA 3'-end maturation. Removes nucleotide residues following the 3'-CCA terminus of tRNAs; can also add nucleotides to the ends of RNA molecules by using nucleoside diphosphates as substrates, but this may not be physiologically important. Probably plays a role in initiation of 16S rRNA degradation (leading to ribosome degradation) during starvation. The protein is Ribonuclease PH of Cereibacter sphaeroides (strain ATCC 17029 / ATH 2.4.9) (Rhodobacter sphaeroides).